The following is a 724-amino-acid chain: Probable metal-nicotianamine transporter YSL8 (724 aa).

The segment at 1 to 58 is disordered; the sequence is MRKGGLTPDRDRQIEEHELQETGISPDIERLKRNINATPYQREEEEEDREEQEESVEG. Basic and acidic residues predominate over residues 8–20; the sequence is PDRDRQIEEHELQ. A Phosphoserine modification is found at Ser-25. Positions 43 to 56 are enriched in acidic residues; sequence EEEEEDREEQEESV. 7 helical membrane passes run 72–92, 96–116, 144–164, 184–204, 245–265, 304–324, and 349–369; these read LTIR…FIVM, LTTG…FFFV, CVVA…LFAM, LGWM…SVVP, VLGK…FFTA, IINI…WPLI, and VFIA…KVLI. The interval 386 to 407 is disordered; that stretch reads RSSLAHKEDPPASPASPLTPRI. A run of 8 helical transmembrane segments spans residues 423–443, 455–475, 478–497, 501–520, 541–561, 603–623, 641–661, and 679–699; these read IPSW…TAIL, IIVI…GAGL, WSLA…AWAG, GGLL…VSTA, FVSQ…VFWL, LMLC…KDCL, FFLG…LFVW, and GLIC…IAGV.

It belongs to the YSL (TC 2.A.67.2) family.

It is found in the membrane. In terms of biological role, may be involved in the transport of nicotianamine-chelated metals. This chain is Probable metal-nicotianamine transporter YSL8 (YSL8), found in Arabidopsis thaliana (Mouse-ear cress).